Here is a 388-residue protein sequence, read N- to C-terminus: Formate-dependent phosphoribosylglycinamide formyltransferase (388 aa).

N(1)-(5-phospho-beta-D-ribosyl)glycinamide contacts are provided by residues 15–16 (EL) and glutamate 75. ATP-binding positions include arginine 107, lysine 148, 153-158 (SSGKGQ), 188-191 (EEFL), and glutamate 196. An ATP-grasp domain is found at 112 to 302 (DLASAELALL…EFELHLRAVL (191 aa)). The Mg(2+) site is built by glutamate 261 and glutamate 273. N(1)-(5-phospho-beta-D-ribosyl)glycinamide contacts are provided by residues aspartate 280, lysine 350, and 357–358 (RR).

It belongs to the PurK/PurT family. Homodimer.

The enzyme catalyses N(1)-(5-phospho-beta-D-ribosyl)glycinamide + formate + ATP = N(2)-formyl-N(1)-(5-phospho-beta-D-ribosyl)glycinamide + ADP + phosphate + H(+). Its pathway is purine metabolism; IMP biosynthesis via de novo pathway; N(2)-formyl-N(1)-(5-phospho-D-ribosyl)glycinamide from N(1)-(5-phospho-D-ribosyl)glycinamide (formate route): step 1/1. Its function is as follows. Involved in the de novo purine biosynthesis. Catalyzes the transfer of formate to 5-phospho-ribosyl-glycinamide (GAR), producing 5-phospho-ribosyl-N-formylglycinamide (FGAR). Formate is provided by PurU via hydrolysis of 10-formyl-tetrahydrofolate. The sequence is that of Formate-dependent phosphoribosylglycinamide formyltransferase from Prochlorococcus marinus (strain MIT 9313).